The sequence spans 308 residues: tRNA dimethylallyltransferase (308 aa).

ATP is bound at residue glycine 14–threonine 21. A substrate-binding site is contributed by threonine 16–threonine 21. Interaction with substrate tRNA stretches follow at residues aspartate 39–leucine 42, glutamine 163–arginine 167, and arginine 244–arginine 249.

The protein belongs to the IPP transferase family. In terms of assembly, monomer. It depends on Mg(2+) as a cofactor.

The enzyme catalyses adenosine(37) in tRNA + dimethylallyl diphosphate = N(6)-dimethylallyladenosine(37) in tRNA + diphosphate. Functionally, catalyzes the transfer of a dimethylallyl group onto the adenine at position 37 in tRNAs that read codons beginning with uridine, leading to the formation of N6-(dimethylallyl)adenosine (i(6)A). In Shewanella baltica (strain OS185), this protein is tRNA dimethylallyltransferase.